The sequence spans 357 residues: Probable dual-specificity RNA methyltransferase RlmN (357 aa).

The active-site Proton acceptor is the Glu95. The Radical SAM core domain occupies 106–340; that stretch reads NRDRHTVCVS…VSVREEKGTD (235 aa). The cysteines at positions 113 and 345 are disulfide-linked. Positions 120, 124, and 127 each coordinate [4Fe-4S] cluster. S-adenosyl-L-methionine is bound by residues 172–173, Ser204, 227–229, and Asn302; these read GE and SLH. The active-site S-methylcysteine intermediate is Cys345.

The protein belongs to the radical SAM superfamily. RlmN family. The cofactor is [4Fe-4S] cluster.

The protein localises to the cytoplasm. It carries out the reaction adenosine(2503) in 23S rRNA + 2 reduced [2Fe-2S]-[ferredoxin] + 2 S-adenosyl-L-methionine = 2-methyladenosine(2503) in 23S rRNA + 5'-deoxyadenosine + L-methionine + 2 oxidized [2Fe-2S]-[ferredoxin] + S-adenosyl-L-homocysteine. The enzyme catalyses adenosine(37) in tRNA + 2 reduced [2Fe-2S]-[ferredoxin] + 2 S-adenosyl-L-methionine = 2-methyladenosine(37) in tRNA + 5'-deoxyadenosine + L-methionine + 2 oxidized [2Fe-2S]-[ferredoxin] + S-adenosyl-L-homocysteine. Functionally, specifically methylates position 2 of adenine 2503 in 23S rRNA and position 2 of adenine 37 in tRNAs. This chain is Probable dual-specificity RNA methyltransferase RlmN, found in Desulfitobacterium hafniense (strain Y51).